The sequence spans 64 residues: Small ribosomal subunit protein eS17 (64 aa).

Belongs to the eukaryotic ribosomal protein eS17 family.

The protein is Small ribosomal subunit protein eS17 of Natronomonas pharaonis (strain ATCC 35678 / DSM 2160 / CIP 103997 / JCM 8858 / NBRC 14720 / NCIMB 2260 / Gabara) (Halobacterium pharaonis).